The primary structure comprises 1167 residues: Carbamoyl phosphate synthase large chain (1167 aa).

A carboxyphosphate synthetic domain region spans residues 1–455 (MPRRTDIKSI…SLQKALRGLE (455 aa)). Residues arginine 129, arginine 221, glycine 227, glycine 228, glutamate 260, valine 262, glutamate 267, glycine 293, valine 294, histidine 295, glutamine 337, and glutamate 351 each coordinate ATP. The 197-residue stretch at 184–380 (LETRWNLGEG…IAKIAAKLAV (197 aa)) folds into the ATP-grasp 1 domain. Mg(2+)-binding residues include glutamine 337, glutamate 351, and asparagine 353. Mn(2+) is bound by residues glutamine 337, glutamate 351, and asparagine 353. Positions 456-619 (TGLTGLDEIE…PFAGALANEA (164 aa)) are oligomerization domain. The carbamoyl phosphate synthetic domain stretch occupies residues 620–1031 (QVSSRKKVVI…AFAKSQLGAG (412 aa)). The ATP-grasp 2 domain occupies 748-960 (QKLLHKLGLS…IAKIAARIMA (213 aa)). Residues arginine 784, threonine 844, leucine 846, glutamate 851, glycine 876, isoleucine 877, histidine 878, serine 879, glutamine 919, and glutamate 931 each coordinate ATP. Mg(2+) is bound by residues glutamine 919, glutamate 931, and asparagine 933. 3 residues coordinate Mn(2+): glutamine 919, glutamate 931, and asparagine 933. The MGS-like domain occupies 1032–1167 (VDLPRSGTLF…EVRPLQEYFA (136 aa)). The tract at residues 1032–1167 (VDLPRSGTLF…EVRPLQEYFA (136 aa)) is allosteric domain.

Belongs to the CarB family. In terms of assembly, composed of two chains; the small (or glutamine) chain promotes the hydrolysis of glutamine to ammonia, which is used by the large (or ammonia) chain to synthesize carbamoyl phosphate. Tetramer of heterodimers (alpha,beta)4. Mg(2+) serves as cofactor. The cofactor is Mn(2+).

It catalyses the reaction hydrogencarbonate + L-glutamine + 2 ATP + H2O = carbamoyl phosphate + L-glutamate + 2 ADP + phosphate + 2 H(+). It carries out the reaction hydrogencarbonate + NH4(+) + 2 ATP = carbamoyl phosphate + 2 ADP + phosphate + 2 H(+). It functions in the pathway amino-acid biosynthesis; L-arginine biosynthesis; carbamoyl phosphate from bicarbonate: step 1/1. The protein operates within pyrimidine metabolism; UMP biosynthesis via de novo pathway; (S)-dihydroorotate from bicarbonate: step 1/3. Functionally, large subunit of the glutamine-dependent carbamoyl phosphate synthetase (CPSase). CPSase catalyzes the formation of carbamoyl phosphate from the ammonia moiety of glutamine, carbonate, and phosphate donated by ATP, constituting the first step of 2 biosynthetic pathways, one leading to arginine and/or urea and the other to pyrimidine nucleotides. The large subunit (synthetase) binds the substrates ammonia (free or transferred from glutamine from the small subunit), hydrogencarbonate and ATP and carries out an ATP-coupled ligase reaction, activating hydrogencarbonate by forming carboxy phosphate which reacts with ammonia to form carbamoyl phosphate. This Mesorhizobium japonicum (strain LMG 29417 / CECT 9101 / MAFF 303099) (Mesorhizobium loti (strain MAFF 303099)) protein is Carbamoyl phosphate synthase large chain.